The primary structure comprises 345 residues: N(4)-(Beta-N-acetylglucosaminyl)-L-asparaginase (345 aa).

The first 23 residues, 1-23, serve as a signal peptide directing secretion; sequence MARKWNLPFLLLPLVLGIPLVRG. N-linked (GlcNAc...) asparagine glycosylation occurs at asparagine 38. Cysteine 64 and cysteine 69 form a disulfide bridge. Asparagine 149 carries N-linked (GlcNAc...) asparagine glycosylation. Cysteine 163 and cysteine 179 are oxidised to a cystine. The active-site Nucleophile is the threonine 205. Substrate-binding positions include 233–236 and 256–259; these read RVGD and TGDG. Cysteine 285 and cysteine 305 form a disulfide bridge. Residue asparagine 307 is glycosylated (N-linked (GlcNAc...) asparagine). A disulfide bond links cysteine 316 and cysteine 344.

The protein belongs to the Ntn-hydrolase family. In terms of assembly, heterotetramer of two alpha and two beta chains arranged as a dimer of alpha/beta heterodimers. Post-translationally, N-glycosylated. In terms of processing, cleaved into an alpha and beta chain by autocatalysis; this activates the enzyme. The N-terminal residue of the beta subunit is responsible for the nucleophile hydrolase activity.

It is found in the lysosome. It catalyses the reaction N(4)-(beta-N-acetyl-D-glucosaminyl)-L-asparagine + H2O = N-acetyl-beta-D-glucosaminylamine + L-aspartate + H(+). In terms of biological role, cleaves the GlcNAc-Asn bond which joins oligosaccharides to the peptide of asparagine-linked glycoproteins. The protein is N(4)-(Beta-N-acetylglucosaminyl)-L-asparaginase (Aga) of Rattus norvegicus (Rat).